We begin with the raw amino-acid sequence, 394 residues long: Potassium channel subfamily K member 18 (394 aa).

Topologically, residues 1-31 (MEAEEPPEARRCCPEALGKARGCCPEALGKL) are cytoplasmic. The chain crosses the membrane as a helical span at residues 32–52 (LPGLCFLCCLVTYALVGAALF). N83 carries an N-linked (GlcNAc...) asparagine glycan. An intramembrane region (pore-forming) is located at residues 114–140 (FLSALFFCCTVFSTVGYGHMYPVTRLG). Residues T127, V128, G129, and Y130 each contribute to the K(+) site. Positions 127 to 132 (TVGYGH) are selectivity filter 1. A helical transmembrane segment spans residues 142–162 (FLCMLYALFGIPLMFLVLTDI). Over 163–292 (GDILATILSR…EVGQQVERLD (130 aa)) the chain is Cytoplasmic. An interaction with calcineurin region spans residues 210 to 215 (PQIVID). The segment at 261 to 266 (RSNSCP) is interaction with YWHAH. Phosphoserine is present on residues S264 and S276. A helical transmembrane segment spans residues 293–313 (IPLPVIALVVFAYISCAAAIL). An intramembrane region (pore-forming) is located at residues 326-340 (FYFCFVTLTTIGFGD). A selectivity filter 2 region spans residues 335 to 340 (TIGFGD). Residues 347–367 (HFFLFFSIYIIVGMEILFIAF) form a helical membrane-spanning segment. Residues 368 to 394 (KLMQNRLLHTYKTLMLFVCQREVSLPW) are Cytoplasmic-facing.

This sequence belongs to the two pore domain potassium channel (TC 1.A.1.8) family. As to quaternary structure, homodimer. Heterodimer with KCNK2. Heterodimer with KCNK10. Interacts with calcineurin. Interacts with YWHAH, in a phosphorylation-dependent manner. Phosphorylation of Ser-264 is required for the binding of 14-3-3eta/YWHAH. Calcineurin-mediated dephosphorylation of Ser-276 enhances channel activity. In terms of processing, N-glycosylated. In terms of tissue distribution, detected in brain cortex, cerebellum, dorsal root ganglion, spinal cord and testis. High expression in trigeminal ganglion (at protein level), also expressed in autonomic nervous system ganglia such as the stellate ganglion and paravertebral sympathetic ganglia. Expressed in all adult spinal cord and brain regions, with slightly higher expression in thalamus, hypothalamus, hippocampus and posterior corte (at protein level). In non-neuronal tissues, substantial expression found in lung and heart and weal expression in liver, testis, kidney, small intestine and spleen. Expressed in regulatory T cells (at protein level).

It is found in the cell membrane. It catalyses the reaction K(+)(in) = K(+)(out). Its activity is regulated as follows. Activated upon cell stimulation via Ca(2+)-mobilizing receptors, such as CHRM1/M1 muscarinic receptor and AGTR1/AT1a angiotensin receptor. Activated by volatile anesthetics, such as isoflurane and inhibited by local anesthetics such as bupivacaine and lidocaine. Inhibited by extracellular acidic pH. Inhibited by Zn(2+) ions. Inhibited by hydroxy-alpha-sanshool, an ingredient of Schezuan pepper. Inhibited by Ba(2+) ions. Functionally, k(+) channel that conducts outward and inward rectifying currents at depolarized and hyperpolarized membrane potentials, respectively. The outward rectifying currents are voltage-dependent, coupled to K(+) electrochemical gradient across the membrane, whereas the inward currents can be induced in response to activation of Ca(2+)-mobilizing receptors. Homo- and heterodimerizes to form functional channels with distinct regulatory and gating properties. In trigeminal ganglia sensory neurons, the heterodimers of KCNK18/TRESK and KCNK2/TREK-1 or KCNK10/TREK-2 inhibit neuronal firing and neurogenic inflammation by stabilizing the resting membrane potential at K(+) equilibrium potential as well as by regulating the threshold of action potentials and the spike frequency. In thymocytes, conducts K(+) currents upon T cell receptor (TCR) signaling leading to sustained Ca(2+) influx and NF-kappa-B activation, FOXP3 transcription and positive selection of regulatory T cell (Treg) progenitor subsets. Appears to mediate the analgesics effects of hydroxy-alpha-sanshool, a metabolite naturally present in Schezuan pepper and other Xanthoxylum plants. The sequence is that of Potassium channel subfamily K member 18 from Mus musculus (Mouse).